We begin with the raw amino-acid sequence, 518 residues long: Sensory neuron membrane protein 1 (518 aa).

At 1–8 (MKTAEKLG) the chain is on the cytoplasmic side. Residues 9–29 (IIGTTISIFGIGFGWGVFPWL) form a helical membrane-spanning segment. The Extracellular portion of the chain corresponds to 30–456 (IRMQIGRVSL…ELFRILQFLD (427 aa)). 6 N-linked (GlcNAc...) asparagine glycosylation sites follow: Asn-64, Asn-186, Asn-225, Asn-316, Asn-334, and Asn-381. Disulfide bonds link Cys-265–Cys-330, Cys-294–Cys-349, and Cys-332–Cys-338. The helical transmembrane segment at 457–477 (VIKWVITLFGAGVVSGGVGLY) threads the bilayer. The Cytoplasmic portion of the chain corresponds to 478-518 (YKEKNSLPITPTSSATSKKIDNPTDKTTTHELGHTNFGYIN).

This sequence belongs to the CD36 family.

It localises to the cell membrane. Functionally, plays an olfactory role that is not restricted to pheromone sensitivity. This chain is Sensory neuron membrane protein 1, found in Pediculus humanus subsp. corporis (Body louse).